We begin with the raw amino-acid sequence, 486 residues long: ATP-dependent rRNA helicase rrp3 (486 aa).

The disordered stretch occupies residues 1 to 60 (MSSVKRRKTDKNPSLEGLKSKKTKESKKESHTPSPEPIEDTEDNRVIEETEEAEEDDAPK). Positions 60–88 (KSFKDLGIVDSLCEACDTLGYKAPTPIQR) match the Q motif motif. The Helicase ATP-binding domain occupies 91-262 (IPLALQGRDL…RASLKDPLRV (172 aa)). 104–111 (AETGSGKT) serves as a coordination point for ATP. The DEAD box motif lies at 210–213 (DEAD). Residues 286–434 (HKDTYLIYLL…EYPTVKDEVM (149 aa)) enclose the Helicase C-terminal domain. Basic and acidic residues-rich tracts occupy residues 447 to 460 (ARNE…DRGK) and 476 to 486 (RGRDEMDREEG). A disordered region spans residues 447–486 (ARNEMKNLHEDRGKKGAVLKGRRPANGAKRGRDEMDREEG).

This sequence belongs to the DEAD box helicase family. DDX47/RRP3 subfamily. Interacts with the SSU processome.

The protein localises to the nucleus. The catalysed reaction is ATP + H2O = ADP + phosphate + H(+). Its function is as follows. ATP-dependent rRNA helicase required for pre-ribosomal RNA processing. Involved in the maturation of the 35S-pre-rRNA and to its cleavage to mature 18S rRNA. This chain is ATP-dependent rRNA helicase rrp3, found in Botryotinia fuckeliana (strain B05.10) (Noble rot fungus).